Here is a 340-residue protein sequence, read N- to C-terminus: Glycerol-3-phosphate dehydrogenase [NAD(P)+] (340 aa).

NADPH-binding residues include Ser-14, Phe-15, Arg-35, and Lys-108. Lys-108 and Gly-136 together coordinate sn-glycerol 3-phosphate. Ala-140 serves as a coordination point for NADPH. 5 residues coordinate sn-glycerol 3-phosphate: Lys-191, Asp-244, Ser-254, Arg-255, and Asn-256. The Proton acceptor role is filled by Lys-191. Residue Arg-255 coordinates NADPH. Residues Val-279 and Glu-281 each contribute to the NADPH site.

This sequence belongs to the NAD-dependent glycerol-3-phosphate dehydrogenase family.

The protein localises to the cytoplasm. It catalyses the reaction sn-glycerol 3-phosphate + NAD(+) = dihydroxyacetone phosphate + NADH + H(+). The enzyme catalyses sn-glycerol 3-phosphate + NADP(+) = dihydroxyacetone phosphate + NADPH + H(+). It participates in membrane lipid metabolism; glycerophospholipid metabolism. In terms of biological role, catalyzes the reduction of the glycolytic intermediate dihydroxyacetone phosphate (DHAP) to sn-glycerol 3-phosphate (G3P), the key precursor for phospholipid synthesis. This Ectopseudomonas mendocina (strain ymp) (Pseudomonas mendocina) protein is Glycerol-3-phosphate dehydrogenase [NAD(P)+].